The sequence spans 245 residues: Ribonuclease 3 (245 aa).

In terms of domain architecture, RNase III spans 18–146 (LSKFLENLSI…FVGAIYLDSG (129 aa)). E59 contacts Mg(2+). The active site involves D63. Residues D132 and E135 each coordinate Mg(2+). The active site involves E135. A DRBM domain is found at 173–242 (DYKSLLQEYV…AEVALKAMEN (70 aa)).

It belongs to the ribonuclease III family. As to quaternary structure, homodimer. Mg(2+) serves as cofactor.

The protein resides in the cytoplasm. The catalysed reaction is Endonucleolytic cleavage to 5'-phosphomonoester.. Functionally, digests double-stranded RNA. Involved in the processing of primary rRNA transcript to yield the immediate precursors to the large and small rRNAs (23S and 16S). Processes some mRNAs, and tRNAs when they are encoded in the rRNA operon. Processes pre-crRNA and tracrRNA of type II CRISPR loci if present in the organism. The polypeptide is Ribonuclease 3 (Borreliella burgdorferi (strain ATCC 35210 / DSM 4680 / CIP 102532 / B31) (Borrelia burgdorferi)).